A 387-amino-acid polypeptide reads, in one-letter code: DNA double-strand break repair protein Mre11 (387 aa).

Mn(2+) is bound by residues Asp-9, His-11, Asp-50, and Asn-85. The active-site Proton donor is the His-86. 3 residues coordinate Mn(2+): His-150, Asp-181, and His-183. Positions 365-387 are disordered; the sequence is AVLDDDADAADDDGRPTTVEEFQ. The span at 366–375 shows a compositional bias: acidic residues; the sequence is VLDDDADAAD.

Belongs to the MRE11/RAD32 family. As to quaternary structure, homodimer. Forms a heterotetramer composed of two Mre11 subunits and two Rad50 subunits. The cofactor is Mn(2+).

With respect to regulation, nuclease activity is regulated by Rad50. In terms of biological role, part of the Rad50/Mre11 complex, which is involved in the early steps of DNA double-strand break (DSB) repair. Mre11 binds to DSB ends and has both double-stranded 3'-5' exonuclease activity and single-stranded endonuclease activity. This is DNA double-strand break repair protein Mre11 from Halobacterium salinarum (strain ATCC 700922 / JCM 11081 / NRC-1) (Halobacterium halobium).